A 160-amino-acid polypeptide reads, in one-letter code: Cytochrome b6-f complex subunit 4 (160 aa).

A run of 3 helical transmembrane segments spans residues I36–V56, L96–I116, and T131–I151.

This sequence belongs to the cytochrome b family. PetD subfamily. In terms of assembly, the 4 large subunits of the cytochrome b6-f complex are cytochrome b6, subunit IV (17 kDa polypeptide, petD), cytochrome f and the Rieske protein, while the 4 small subunits are petG, petL, petM and petN. The complex functions as a dimer.

The protein localises to the plastid. The protein resides in the chloroplast thylakoid membrane. Component of the cytochrome b6-f complex, which mediates electron transfer between photosystem II (PSII) and photosystem I (PSI), cyclic electron flow around PSI, and state transitions. The chain is Cytochrome b6-f complex subunit 4 from Auxenochlorella protothecoides (Green microalga).